The sequence spans 356 residues: D-alanine--D-alanine ligase (356 aa).

One can recognise an ATP-grasp domain in the interval 134 to 339; that stretch reads KQLFAHRGLP…YSDLIKKLIE (206 aa). Residue 167 to 222 participates in ATP binding; the sequence is HDKLEYPVFVKPANLGSSVGISKCNNEEELKNGIEEAFQFDRKLVIEQGIEAREIE. Positions 293, 306, and 308 each coordinate Mg(2+).

The protein belongs to the D-alanine--D-alanine ligase family. It depends on Mg(2+) as a cofactor. Requires Mn(2+) as cofactor.

It localises to the cytoplasm. It carries out the reaction 2 D-alanine + ATP = D-alanyl-D-alanine + ADP + phosphate + H(+). It participates in cell wall biogenesis; peptidoglycan biosynthesis. Its function is as follows. Cell wall formation. This chain is D-alanine--D-alanine ligase, found in Staphylococcus saprophyticus subsp. saprophyticus (strain ATCC 15305 / DSM 20229 / NCIMB 8711 / NCTC 7292 / S-41).